The chain runs to 630 residues: Tyrosinase (630 aa).

Residues His69, His92, His101, His317, His321, and His360 each coordinate Cu cation. A cross-link (2'-(S-cysteinyl)-histidine (Cys-His)) is located at residues 90 to 92 (CVH).

This sequence belongs to the tyrosinase family. Requires Cu(2+) as cofactor.

The enzyme catalyses 2 L-dopa + O2 = 2 L-dopaquinone + 2 H2O. It carries out the reaction L-tyrosine + O2 = L-dopaquinone + H2O. Functionally, this is a copper-containing oxidase that functions in the formation of pigments such as melanins and other polyphenolic compounds. In Aspergillus fumigatus (strain ATCC MYA-4609 / CBS 101355 / FGSC A1100 / Af293) (Neosartorya fumigata), this protein is Tyrosinase (tyr1).